The sequence spans 444 residues: MTSGVSGSSSQDPTLAAQLAQSSQKAGNAQSGHDTKNVTKQGAQAEVAAGGFEDLIQDASAQSTGKKEATSSTTKSSKGEKSEKSGKSKSSTSVASASETATAQAVQGPKGLRQNNYDSPSLPTPEAQTINGIVLKKGMGTLALLGLVMTLMANAAGESWKASFQSQNQAIRSQVESAPAIGEAIKRQANHQASATEAQAKQSLISGIVNIVGFTVSVGAGIFSAAKGATSALKSASFAKETGASAAGGAASKALTSASSSVQQTMASTAKAATTAASSAGSAATKAAANLTDDMAAAASKMASDGASKASGGLFGEVLNKPNWSEKVSRGMNVVKTQGARVASFAGNALSSSMQMSQLMHGLTAAVEGLSAGQTGIEVAHHQRLAGQAEAQAEVLKQMSSVYGQQAGQAGQLQEQAMQSFNTALQTLQNIADSQTQTTSAIFN.

Over residues 1–13 (MTSGVSGSSSQDP) the composition is skewed to polar residues. Positions 1 to 124 (MTSGVSGSSS…NNYDSPSLPT (124 aa)) are disordered. Residues 15 to 24 (LAAQLAQSSQ) are compositionally biased toward low complexity. Polar residues predominate over residues 25 to 42 (KAGNAQSGHDTKNVTKQG). The span at 77–86 (SKGEKSEKSG) shows a compositional bias: basic and acidic residues. Low complexity predominate over residues 88-103 (SKSSTSVASASETATA). Polar residues predominate over residues 113–124 (RQNNYDSPSLPT).

Belongs to the chlamydial CPn_0808/CT_579/TC_0868 family.

This Chlamydia pneumoniae (Chlamydophila pneumoniae) protein is Protein CPn_0808/CP_1063/CPj0808/CpB0837.